Here is a 338-residue protein sequence, read N- to C-terminus: MIASEIFERGVQDPFCQDCDYEDETDVQSFLGSNDLNDFVNSKLASFSFQNSSKSNNSHHSSSTNAGNTSRHIGNHTIGHHLRKIKTAPHHLYGFVPANSTNNSNEPIRPSPRRIRANSSTLIHQLSRQSTRQSSLGDAADSCFDHKCIKPRSRHSSCYGIPTHLYGLEKYVSSELDSLAVANDQSNDLTSPLTSVSTPASNSNSYLNLNSSSAAYPSSYLSNEKNNRLKLISHGKISSNNVPGHSGNLNHYHRERTPSNLRRESFSLLSNGSSSSPLQTRNNSYSNSLVKSPSNSSLNTSVASSNEESSPHTSNCLEERNPRRKSFIKLSLASSFSN.

Positions 50–70 (QNSSKSNNSHHSSSTNAGNTS) are enriched in low complexity. A disordered region spans residues 50 to 75 (QNSSKSNNSHHSSSTNAGNTSRHIGN). S119 carries the post-translational modification Phosphoserine. Over residues 267–306 (SLLSNGSSSSPLQTRNNSYSNSLVKSPSNSSLNTSVASSN) the composition is skewed to low complexity. Residues 267–322 (SLLSNGSSSSPLQTRNNSYSNSLVKSPSNSSLNTSVASSNEESSPHTSNCLEERNP) form a disordered region. The segment covering 307–316 (EESSPHTSNC) has biased composition (polar residues).

Belongs to the ISF1/MBR1 family.

Its function is as follows. Could influence the NAM7/UPF1 function, possibly at the level of mRNA turnover. Participates in mitochondrial biogenesis. This chain is Increasing suppression factor 1 (ISF1), found in Saccharomyces cerevisiae (strain ATCC 204508 / S288c) (Baker's yeast).